A 170-amino-acid polypeptide reads, in one-letter code: Envelope protein 166 (170 aa).

Met1 is a topological domain (intravirion). A helical transmembrane segment spans residues 2–22 (FYPVVQVLIGIILVIILILGF). Residues 23 to 170 (YHMKHKPPKK…TVMGIARNVL (148 aa)) lie on the Virion surface side of the membrane.

It belongs to the asfivirus envelope protein p22 family.

Its subcellular location is the virion membrane. The protein localises to the host cell membrane. The sequence is that of Envelope protein 166 from Ornithodoros (relapsing fever ticks).